Here is a 390-residue protein sequence, read N- to C-terminus: O-glycoside alpha-1,2-mannosyltransferase omh1 (390 aa).

Residue Glu279 is the Nucleophile of the active site.

It belongs to the glycosyltransferase 15 family.

It is found in the endoplasmic reticulum. The protein localises to the golgi apparatus. Mannosyltransferase involved in O-glycosylation of cell wall and secreted proteins. Plays a major role in extending alpha-1,2-linked mannose in the O-glycan pathway. This Schizosaccharomyces pombe (strain 972 / ATCC 24843) (Fission yeast) protein is O-glycoside alpha-1,2-mannosyltransferase omh1 (omh1).